A 523-amino-acid polypeptide reads, in one-letter code: Flavonoid 3',5'-hydroxylase (523 aa).

Position 460 (cysteine 460) interacts with heme.

This sequence belongs to the cytochrome P450 family. Heme is required as a cofactor.

It catalyses the reaction a 3',5'-unsubstituted flavanone + 2 reduced [NADPH--hemoprotein reductase] + 2 O2 = a 3',5'-dihydroxyflavanone + 2 oxidized [NADPH--hemoprotein reductase] + 2 H2O + 2 H(+). It functions in the pathway pigment biosynthesis; anthocyanin biosynthesis. Catalyzes the 3'5'-hydroxylation of naringenin and eriodictyol to form 5,7,3,'4',5'-pentahydroxyflavanone and 3',5'-hydroxylation of dihydrokaempferol and dihydroquercetin to form dihydromyricetin. The protein is Flavonoid 3',5'-hydroxylase (CYP75A6) of Campanula medium (Canterbury bells).